Reading from the N-terminus, the 326-residue chain is D-alanine--D-alanine ligase (326 aa).

Residues lysine 114–serine 313 enclose the ATP-grasp domain. Proline 140–threonine 195 is an ATP binding site. Positions 267, 280, and 282 each coordinate Mg(2+).

This sequence belongs to the D-alanine--D-alanine ligase family. Requires Mg(2+) as cofactor. Mn(2+) serves as cofactor.

The protein localises to the cytoplasm. The catalysed reaction is 2 D-alanine + ATP = D-alanyl-D-alanine + ADP + phosphate + H(+). It functions in the pathway cell wall biogenesis; peptidoglycan biosynthesis. Its function is as follows. Cell wall formation. This Bordetella petrii (strain ATCC BAA-461 / DSM 12804 / CCUG 43448) protein is D-alanine--D-alanine ligase.